The sequence spans 366 residues: Dehydrogenase aclE (366 aa).

The first 19 residues, 1–19 (MSKRIRLGIVGLSADPSHC), serve as a signal peptide directing secretion. Residue N330 is glycosylated (N-linked (GlcNAc...) asparagine).

The protein belongs to the Gfo/Idh/MocA family.

It participates in mycotoxin biosynthesis. Functionally, dehydrogenase; part of the gene cluster that mediates the biosynthesis of aspirochlorine (or antibiotic A30641), an unusual halogenated spiro compound with distinctive antifungal properties due to selective inhibition of protein biosynthesis, and which is also active against bacteria, viruses, and murine tumor cells. The non-ribosomal peptide synthetase (NRPS) aclP is responsible the formation of the diketopiperazine (DKP) core from the condensation of 2 phenylalanine residues. One Phe residue is tailored into chlorotyrosine by hydroxylation and chlorination, whereas the second Phe undergoes an unprecedented C-C bond cleavage to be converted into glycine. After formation of the DKP, sulfur is incorporated into the DKP by conjugation with glutathione by aclG, followed by its stepwise degradation to the thiol by aclI, aclJ and aclK, and the dithiol oxidation by aclT. In addition, oxygenases (aclB, aclC, aclL and aclO) and O-methyltransferases (aclM and aclU) act as tailoring enzymes to produce the intermediate dechloroaspirochlorine. Ultimately, chlorination of dechloroaspirochlorine by the halogenase aclH is the last step in the aspirochlorine pathway. This chain is Dehydrogenase aclE, found in Aspergillus oryzae (strain ATCC 42149 / RIB 40) (Yellow koji mold).